Reading from the N-terminus, the 422-residue chain is UPF0229 protein SO_2883 (422 aa).

The interval Ser60–Asn111 is disordered. The span at Gly70 to Arg90 shows a compositional bias: basic and acidic residues.

The protein belongs to the UPF0229 family.

The chain is UPF0229 protein SO_2883 from Shewanella oneidensis (strain ATCC 700550 / JCM 31522 / CIP 106686 / LMG 19005 / NCIMB 14063 / MR-1).